The primary structure comprises 803 residues: Spondin-1 (803 aa).

Residues 1 to 23 (MGLIFQPLFWQYVATSYALMVLG) form the signal peptide. Residues 24–190 (FLDETVEKAI…DLTLEGGNEK (167 aa)) enclose the Reelin domain. 14 disulfide bridges follow: cysteine 39–cysteine 124, cysteine 152–cysteine 178, cysteine 195–cysteine 331, cysteine 196–cysteine 335, cysteine 198–cysteine 409, cysteine 437–cysteine 474, cysteine 448–cysteine 483, cysteine 453–cysteine 488, cysteine 496–cysteine 532, cysteine 507–cysteine 511, cysteine 542–cysteine 548, cysteine 553–cysteine 589, cysteine 564–cysteine 568, and cysteine 599–cysteine 604. One can recognise a Spondin domain in the interval 191–383 (TIPDCCACGT…LTSLDHPQSP (193 aa)). A glycan (N-linked (GlcNAc...) asparagine) is linked at asparagine 210. Ca(2+) is bound by residues aspartate 320, aspartate 349, and aspartate 353. Residues 353–389 (DSGVTYESPNKPTIPQDKIRPLTSLDHPQSPSMTRGG) are disordered. The span at 354 to 365 (SGVTYESPNKPT) shows a compositional bias: polar residues. TSP type-1 domains are found at residues 436 to 489 (TCIY…PGCS), 495 to 549 (TCMM…EECE), 552 to 605 (SCIV…PECH), 608 to 662 (PCVL…PECP), and 664 to 717 (SCEL…RKCQ). N-linked (GlcNAc...) asparagine glycosylation is present at asparagine 677. The segment at 722–741 (NERRHLKDAREKRRSEKIKE) is disordered. The TSP type-1 6 domain occupies 750–802 (VCKMKPWTAWTECTKFCGGGIQERFMTVKKRFKSSQFTSCKDKKEIRACNVHP).

In terms of tissue distribution, expressed at high levels in the floor plate.

The protein resides in the secreted. It is found in the extracellular space. Its subcellular location is the extracellular matrix. Its function is as follows. Promotes the attachment of spinal cord and sensory neuron cells and the outgrowth of neurites in vitro. May contribute to the growth and guidance of axons in both the spinal cord and the PNS. In Xenopus laevis (African clawed frog), this protein is Spondin-1 (spon1).